The following is a 795-amino-acid chain: Putative replication origin-binding protein (795 aa).

The Helicase ATP-binding domain occupies 121 to 289 (WLSNDKIKTL…DNFGKSIVVN (169 aa)). An ATP-binding site is contributed by 134–141 (SPMGTGKT).

This sequence belongs to the mimivirus R1 family.

Its function is as follows. Probably involved in DNA replication. May bind the genome origin of replication (ori). This is Putative replication origin-binding protein from Acanthamoeba polyphaga (Amoeba).